The sequence spans 394 residues: 3-hydroxybenzoate 6-hydroxylase 1 (394 aa).

The protein belongs to the 3-hydroxybenzoate 6-hydroxylase family. As to quaternary structure, homotrimer. Requires FAD as cofactor.

The catalysed reaction is 3-hydroxybenzoate + NADH + O2 + H(+) = 2,5-dihydroxybenzoate + NAD(+) + H2O. With respect to regulation, inhibited by manganese, copper, mercury, and iron ions. Functionally, catalyzes the NAD- or NADP-dependent conversion of 3-hydroxybenzoate to gentisate. The affinity of the enzyme toward NAD is twice as high as for NADP. The enzyme shows higher specific activities against the intermediates in the degradation of 2,5-xylenol and 3,5-xylenol, 3-hydroxy-4-methylbenzoate and 3-hydroxy-5-methylbenzoate, respectively, than for 3-hydroxybenzoate. It also shows activity against 3-substituted benzoates. This Aquipseudomonas alcaligenes (Pseudomonas alcaligenes) protein is 3-hydroxybenzoate 6-hydroxylase 1 (xlnD).